Reading from the N-terminus, the 522-residue chain is Thiamine biosynthetic bifunctional enzyme TH1, chloroplastic (522 aa).

The N-terminal 36 residues, 1-36 (MNSLGGIRSWPANWRSTTASMTTTESVRKVPQVLTV), are a transit peptide targeting the chloroplast. Residues 345 to 349 (QLREK) and asparagine 377 each bind 4-amino-2-methyl-5-(diphosphooxymethyl)pyrimidine. Mg(2+)-binding residues include aspartate 378 and aspartate 397. Serine 416 contributes to the 4-amino-2-methyl-5-(diphosphooxymethyl)pyrimidine binding site. 442–444 (TNT) provides a ligand contact to 2-[(2R,5Z)-2-carboxy-4-methylthiazol-5(2H)-ylidene]ethyl phosphate. Residue lysine 445 participates in 4-amino-2-methyl-5-(diphosphooxymethyl)pyrimidine binding. 2-[(2R,5Z)-2-carboxy-4-methylthiazol-5(2H)-ylidene]ethyl phosphate-binding positions include glycine 472 and 495–496 (VS).

This sequence belongs to the thiamine-phosphate synthase family. Mg(2+) is required as a cofactor.

Its subcellular location is the plastid. It localises to the chloroplast. The catalysed reaction is 2-[(2R,5Z)-2-carboxy-4-methylthiazol-5(2H)-ylidene]ethyl phosphate + 4-amino-2-methyl-5-(diphosphooxymethyl)pyrimidine + 2 H(+) = thiamine phosphate + CO2 + diphosphate. The enzyme catalyses 2-(2-carboxy-4-methylthiazol-5-yl)ethyl phosphate + 4-amino-2-methyl-5-(diphosphooxymethyl)pyrimidine + 2 H(+) = thiamine phosphate + CO2 + diphosphate. It catalyses the reaction 4-methyl-5-(2-phosphooxyethyl)-thiazole + 4-amino-2-methyl-5-(diphosphooxymethyl)pyrimidine + H(+) = thiamine phosphate + diphosphate. It carries out the reaction 4-amino-5-hydroxymethyl-2-methylpyrimidine + ATP = 4-amino-2-methyl-5-(phosphooxymethyl)pyrimidine + ADP + H(+). The protein operates within cofactor biosynthesis; thiamine diphosphate biosynthesis; thiamine phosphate from 4-amino-2-methyl-5-diphosphomethylpyrimidine and 4-methyl-5-(2-phosphoethyl)-thiazole: step 1/1. It functions in the pathway cofactor biosynthesis; thiamine diphosphate biosynthesis; 4-amino-2-methyl-5-diphosphomethylpyrimidine from 5-amino-1-(5-phospho-D-ribosyl)imidazole: step 2/3. In terms of biological role, essential for thiamine biosynthesis. Bifunctional enzyme that catalyzes the phosphorylation of hydroxymethylpyrimidine phosphate (HMP-P) to HMP-PP and condenses 4-methyl-5-(beta-hydroxyethyl)thiazole monophosphate (THZ-P) and 2-methyl-4-amino-5-hydroxymethyl pyrimidine pyrophosphate (HMP-PP) to form thiamine monophosphate (TMP). The protein is Thiamine biosynthetic bifunctional enzyme TH1, chloroplastic (TH1) of Arabidopsis thaliana (Mouse-ear cress).